Here is a 168-residue protein sequence, read N- to C-terminus: Ubiquitin-fold modifier-conjugating enzyme 1 (168 aa).

The active-site Glycyl thioester intermediate is the cysteine 116.

Belongs to the ubiquitin-conjugating enzyme family. UFC1 subfamily.

In terms of biological role, E2-like enzyme which forms an intermediate with UFM1 via a thioester linkage. This chain is Ubiquitin-fold modifier-conjugating enzyme 1, found in Trichoplax adhaerens (Trichoplax reptans).